The following is a 431-amino-acid chain: Histidinol dehydrogenase (431 aa).

NAD(+) contacts are provided by tyrosine 127, glutamine 185, and asparagine 208. Positions 234, 256, and 259 each coordinate substrate. The Zn(2+) site is built by glutamine 256 and histidine 259. Active-site proton acceptor residues include glutamate 323 and histidine 324. Residues histidine 324, aspartate 357, glutamate 411, and histidine 416 each contribute to the substrate site. A Zn(2+)-binding site is contributed by aspartate 357. Histidine 416 is a Zn(2+) binding site.

This sequence belongs to the histidinol dehydrogenase family. It depends on Zn(2+) as a cofactor.

It carries out the reaction L-histidinol + 2 NAD(+) + H2O = L-histidine + 2 NADH + 3 H(+). Its pathway is amino-acid biosynthesis; L-histidine biosynthesis; L-histidine from 5-phospho-alpha-D-ribose 1-diphosphate: step 9/9. Its function is as follows. Catalyzes the sequential NAD-dependent oxidations of L-histidinol to L-histidinaldehyde and then to L-histidine. This Vibrio vulnificus (strain CMCP6) protein is Histidinol dehydrogenase.